The primary structure comprises 64 residues: MAIKPAYVKKTGTLLMDRYPKAFGDDFEHNKELVDELTNIESKSVRNRIAGYVTRKQRSPQQPA.

The protein belongs to the eukaryotic ribosomal protein eS17 family.

The chain is Small ribosomal subunit protein eS17 from Natronomonas pharaonis (strain ATCC 35678 / DSM 2160 / CIP 103997 / JCM 8858 / NBRC 14720 / NCIMB 2260 / Gabara) (Halobacterium pharaonis).